Here is a 148-residue protein sequence, read N- to C-terminus: Gastrin-releasing peptide (148 aa).

Positions 1 to 23 are cleaved as a signal peptide; it reads MRGRELPLVLLALVLCLAPRGRA. M50 carries the methionine amide modification. Residues 54-148 constitute a propeptide that is removed on maturation; sequence STGESSSVSE…EGRNPQLNQQ (95 aa). The segment at 89–148 is disordered; sequence EAKENRNHQPPQPKALGNQQPSWDSEDSSNFKDVGSKGKVGRLSAPGSQREGRNPQLNQQ.

It belongs to the bombesin/neuromedin-B/ranatensin family.

The protein resides in the secreted. Its subcellular location is the cytoplasmic vesicle. The protein localises to the secretory vesicle lumen. It localises to the cell projection. It is found in the neuron projection. Stimulates the release of gastrin and other gastrointestinal hormones. Contributes to the perception of prurient stimuli and to the transmission of itch signals in the spinal cord that promote scratching behavior. Contributes primarily to nonhistaminergic itch sensation. In one study, shown to act in the amygdala as part of an inhibitory network which inhibits memory specifically related to learned fear. In another study, shown to act on vasoactive intestinal peptide (VIP)-expressing cells in the auditory cortex, most likely via extrasynaptic diffusion from local and long-range sources, to mediate disinhibition of glutamatergic cells via VIP cell-specific GRPR signaling which leads to enhanced auditory fear memories. Contributes to the regulation of food intake. Inhibits voltage-gated sodium channels but enhances voltage-gated potassium channels in hippocampal neurons. Induces sighing by acting directly on the pre-Botzinger complex, a cluster of several thousand neurons in the ventrolateral medulla responsible for inspiration during respiratory activity. Its function is as follows. Induces an itch response through activation of receptors present on mast cells, triggering mast cell degranulation. This is Gastrin-releasing peptide (GRP) from Homo sapiens (Human).